A 444-amino-acid chain; its full sequence is MHILVVSVNYRTAPVEFREKLTFQAAELERAMTTLQNQKSVLENVIVSTCNRTEIYAVVDQLHTGRYYIKKFLADWFQLEIEEVAPYLTIFEQDGAIDHLFRVTCGLDSMVVGETQILGQIKDSFLEAQQVKATGTIFNELFKQVITLAKRAHSETTIGESAMSVSYAAVELGKKIFGELTDCHVLILGAGKMGELALQNLYGSGARKVTVMNRTLSKAEIMAEKYMGHAKPLSELQCALLEADILISSTGASDYVITKEMMTKVEKMRSGRPLFMVDIAVPRDIDPAIDELEGSFLYDIDDLQGVVEANRAERLKEAEKIQFMIEEEIVLFKTWLSTLGVVPLISALRDKALAIQSETMESLERKIPNLSDRERKVISKHTKSIINQLLKDPILVAKEIAAEEGADEKLALFAKIFDLEMEDVESRAEEVEHKRAWTPSVPSL.

Substrate contacts are provided by residues 49 to 52 (TCNR), serine 109, 114 to 116 (ETQ), and glutamine 120. The Nucleophile role is filled by cysteine 50. 189–194 (GAGKMG) serves as a coordination point for NADP(+).

Belongs to the glutamyl-tRNA reductase family. Homodimer.

It catalyses the reaction (S)-4-amino-5-oxopentanoate + tRNA(Glu) + NADP(+) = L-glutamyl-tRNA(Glu) + NADPH + H(+). It functions in the pathway porphyrin-containing compound metabolism; protoporphyrin-IX biosynthesis; 5-aminolevulinate from L-glutamyl-tRNA(Glu): step 1/2. In terms of biological role, catalyzes the NADPH-dependent reduction of glutamyl-tRNA(Glu) to glutamate 1-semialdehyde (GSA). The chain is Glutamyl-tRNA reductase from Bacillus cereus (strain ZK / E33L).